We begin with the raw amino-acid sequence, 397 residues long: 1-deoxy-D-xylulose 5-phosphate reductoisomerase (397 aa).

Thr-10, Gly-11, Ser-12, Ile-13, Gly-36, Asn-38, and Asn-128 together coordinate NADPH. 1-deoxy-D-xylulose 5-phosphate is bound at residue Lys-129. Glu-130 contacts NADPH. Asp-154 contacts Mn(2+). Ser-155, Glu-156, Ser-180, and His-203 together coordinate 1-deoxy-D-xylulose 5-phosphate. Glu-156 is a Mn(2+) binding site. Position 209 (Gly-209) interacts with NADPH. 1-deoxy-D-xylulose 5-phosphate is bound by residues Asn-221, Lys-222, and Glu-225. Glu-225 contacts Mn(2+).

The protein belongs to the DXR family. Requires Mg(2+) as cofactor. The cofactor is Mn(2+).

The catalysed reaction is 2-C-methyl-D-erythritol 4-phosphate + NADP(+) = 1-deoxy-D-xylulose 5-phosphate + NADPH + H(+). Its pathway is isoprenoid biosynthesis; isopentenyl diphosphate biosynthesis via DXP pathway; isopentenyl diphosphate from 1-deoxy-D-xylulose 5-phosphate: step 1/6. Functionally, catalyzes the NADPH-dependent rearrangement and reduction of 1-deoxy-D-xylulose-5-phosphate (DXP) to 2-C-methyl-D-erythritol 4-phosphate (MEP). This chain is 1-deoxy-D-xylulose 5-phosphate reductoisomerase, found in Solibacter usitatus (strain Ellin6076).